The following is a 338-amino-acid chain: tRNA N6-adenosine threonylcarbamoyltransferase (338 aa).

Histidine 111 and histidine 115 together coordinate Fe cation. Substrate-binding positions include 134 to 138 (LVSGG), aspartate 167, glycine 180, and asparagine 272. Aspartate 300 is a binding site for Fe cation.

It belongs to the KAE1 / TsaD family. Requires Fe(2+) as cofactor.

It is found in the cytoplasm. It carries out the reaction L-threonylcarbamoyladenylate + adenosine(37) in tRNA = N(6)-L-threonylcarbamoyladenosine(37) in tRNA + AMP + H(+). Its function is as follows. Required for the formation of a threonylcarbamoyl group on adenosine at position 37 (t(6)A37) in tRNAs that read codons beginning with adenine. Is involved in the transfer of the threonylcarbamoyl moiety of threonylcarbamoyl-AMP (TC-AMP) to the N6 group of A37, together with TsaE and TsaB. TsaD likely plays a direct catalytic role in this reaction. This Shewanella halifaxensis (strain HAW-EB4) protein is tRNA N6-adenosine threonylcarbamoyltransferase.